The chain runs to 87 residues: Defensin-like protein 175 (87 aa).

Residues 1–23 (MAKATSSLVVPIIFLVIFALVEQ) form the signal peptide. 4 disulfide bridges follow: Cys-27–Cys-66, Cys-36–Cys-55, Cys-39–Cys-60, and Cys-43–Cys-62.

The protein belongs to the DEFL family.

It localises to the secreted. The polypeptide is Defensin-like protein 175 (Arabidopsis thaliana (Mouse-ear cress)).